Reading from the N-terminus, the 193-residue chain is Transmembrane protein 066L (193 aa).

The next 2 helical transmembrane spans lie at 14-34 (VLFATLLVGSALVFPVGGLVW) and 48-68 (LVVEQHPHVGFALQLLALVVV).

It belongs to the IIV-6 357R family.

It is found in the membrane. The chain is Transmembrane protein 066L from Invertebrate iridescent virus 3 (IIV-3).